The chain runs to 940 residues: Isoleucine--tRNA ligase (940 aa).

A 'HIGH' region motif is present at residues 58–68 (PYANGSIHIGH). E564 contacts L-isoleucyl-5'-AMP. The 'KMSKS' region signature appears at 605–609 (KMSKS). Residue K608 coordinates ATP. Zn(2+) is bound by residues C903, C906, C923, and C926.

This sequence belongs to the class-I aminoacyl-tRNA synthetase family. IleS type 1 subfamily. In terms of assembly, monomer. It depends on Zn(2+) as a cofactor.

The protein resides in the cytoplasm. The enzyme catalyses tRNA(Ile) + L-isoleucine + ATP = L-isoleucyl-tRNA(Ile) + AMP + diphosphate. Functionally, catalyzes the attachment of isoleucine to tRNA(Ile). As IleRS can inadvertently accommodate and process structurally similar amino acids such as valine, to avoid such errors it has two additional distinct tRNA(Ile)-dependent editing activities. One activity is designated as 'pretransfer' editing and involves the hydrolysis of activated Val-AMP. The other activity is designated 'posttransfer' editing and involves deacylation of mischarged Val-tRNA(Ile). In Shewanella sp. (strain ANA-3), this protein is Isoleucine--tRNA ligase.